The primary structure comprises 463 residues: 3-phosphoshikimate 1-carboxyvinyltransferase (463 aa).

Residues lysine 26, serine 27, and arginine 31 each contribute to the 3-phosphoshikimate site. Residue lysine 26 participates in phosphoenolpyruvate binding. Phosphoenolpyruvate is bound by residues glycine 99 and arginine 127. Residues serine 163, serine 164, glutamine 165, serine 188, aspartate 300, and lysine 327 each contribute to the 3-phosphoshikimate site. Glutamine 165 is a phosphoenolpyruvate binding site. Aspartate 300 functions as the Proton acceptor in the catalytic mechanism. Positions 331 and 372 each coordinate phosphoenolpyruvate.

It belongs to the EPSP synthase family. In terms of assembly, monomer.

The protein localises to the cytoplasm. It carries out the reaction 3-phosphoshikimate + phosphoenolpyruvate = 5-O-(1-carboxyvinyl)-3-phosphoshikimate + phosphate. Its pathway is metabolic intermediate biosynthesis; chorismate biosynthesis; chorismate from D-erythrose 4-phosphate and phosphoenolpyruvate: step 6/7. Its function is as follows. Catalyzes the transfer of the enolpyruvyl moiety of phosphoenolpyruvate (PEP) to the 5-hydroxyl of shikimate-3-phosphate (S3P) to produce enolpyruvyl shikimate-3-phosphate and inorganic phosphate. The protein is 3-phosphoshikimate 1-carboxyvinyltransferase of Burkholderia pseudomallei (Pseudomonas pseudomallei).